The following is a 268-amino-acid chain: uncharacterized protein (268 aa).

Residues 132 to 159 (DELDEKIIEFDTKMNEILEELLEDVEVE) are a coiled coil.

This is an uncharacterized protein from Methanocaldococcus jannaschii (strain ATCC 43067 / DSM 2661 / JAL-1 / JCM 10045 / NBRC 100440) (Methanococcus jannaschii).